The sequence spans 222 residues: 3-dehydroquinate dehydratase (222 aa).

Residues E32 to R34 and R64 each bind 3-dehydroquinate. The active-site Proton donor/acceptor is the H117. K143 functions as the Schiff-base intermediate with substrate in the catalytic mechanism. R181 contributes to the 3-dehydroquinate binding site.

This sequence belongs to the type-I 3-dehydroquinase family. In terms of assembly, homodimer.

It carries out the reaction 3-dehydroquinate = 3-dehydroshikimate + H2O. The protein operates within metabolic intermediate biosynthesis; chorismate biosynthesis; chorismate from D-erythrose 4-phosphate and phosphoenolpyruvate: step 3/7. Involved in the third step of the chorismate pathway, which leads to the biosynthesis of aromatic amino acids. Catalyzes the cis-dehydration of 3-dehydroquinate (DHQ) and introduces the first double bond of the aromatic ring to yield 3-dehydroshikimate. The chain is 3-dehydroquinate dehydratase from Aeropyrum pernix (strain ATCC 700893 / DSM 11879 / JCM 9820 / NBRC 100138 / K1).